The sequence spans 282 residues: Putative 4-diphosphocytidyl-2-C-methyl-D-erythritol kinase (282 aa).

Lys-9 is a catalytic residue. An ATP-binding site is contributed by 93–103; it reads PVSAGLAGGSA. Residue Asp-135 is part of the active site.

The protein belongs to the GHMP kinase family. IspE subfamily.

The enzyme catalyses 4-CDP-2-C-methyl-D-erythritol + ATP = 4-CDP-2-C-methyl-D-erythritol 2-phosphate + ADP + H(+). Catalyzes the phosphorylation of the position 2 hydroxy group of 4-diphosphocytidyl-2C-methyl-D-erythritol. In Staphylococcus aureus (strain bovine RF122 / ET3-1), this protein is Putative 4-diphosphocytidyl-2-C-methyl-D-erythritol kinase.